The chain runs to 418 residues: Putative ion-transport protein YfeO (418 aa).

The next 12 membrane-spanning stretches (helical) occupy residues 10–30 (LLLS…LIVV), 54–74 (DSPF…GLVI), 99–119 (ALPG…SLGP), 120–140 (EHPI…RLLP), 149–169 (ILAS…AALI), 186–206 (LFAP…FFHP), 223–243 (ILSG…AVWC), 258–278 (VLML…AGPV), 300–320 (DYFL…ASGF), 322–342 (GGRI…LHEH), 343–363 (VPAV…VLVV), and 371–391 (LFMA…CIVM).

Belongs to the chloride channel (TC 2.A.49) family.

Its subcellular location is the cell membrane. This chain is Putative ion-transport protein YfeO, found in Escherichia coli O7:K1 (strain IAI39 / ExPEC).